A 258-amino-acid chain; its full sequence is Proteasome subunit alpha type-3 (258 aa).

Residues Lys100, Lys199, and Lys231 each participate in a glycyl lysine isopeptide (Lys-Gly) (interchain with G-Cter in ubiquitin) cross-link.

The protein belongs to the peptidase T1A family. The 26S proteasome consists of a 20S proteasome core and two 19S regulatory subunits. The 20S proteasome core is composed of 28 subunits that are arranged in four stacked rings, resulting in a barrel-shaped structure. The two end rings are each formed by seven alpha subunits, and the two central rings are each formed by seven beta subunits. The catalytic chamber with the active sites is on the inside of the barrel.

The protein localises to the cytoplasm. It is found in the nucleus. Functionally, the proteasome degrades poly-ubiquitinated proteins in the cytoplasm and in the nucleus. It is essential for the regulated turnover of proteins and for the removal of misfolded proteins. The proteasome is a multicatalytic proteinase complex that is characterized by its ability to cleave peptides with Arg, Phe, Tyr, Leu, and Glu adjacent to the leaving group at neutral or slightly basic pH. It has an ATP-dependent proteolytic activity. The protein is Proteasome subunit alpha type-3 (PRE9) of Saccharomyces cerevisiae (strain ATCC 204508 / S288c) (Baker's yeast).